The following is a 94-amino-acid chain: Large ribosomal subunit protein bL27 (94 aa).

The propeptide occupies 1 to 9 (MLKMNLQFF).

The protein belongs to the bacterial ribosomal protein bL27 family. Post-translationally, the N-terminus is cleaved by ribosomal processing cysteine protease Prp.

This is Large ribosomal subunit protein bL27 from Halalkalibacterium halodurans (strain ATCC BAA-125 / DSM 18197 / FERM 7344 / JCM 9153 / C-125) (Bacillus halodurans).